The primary structure comprises 281 residues: MEMO1 family protein PAE0818 (281 aa).

Belongs to the MEMO1 family.

In Pyrobaculum aerophilum (strain ATCC 51768 / DSM 7523 / JCM 9630 / CIP 104966 / NBRC 100827 / IM2), this protein is MEMO1 family protein PAE0818.